Reading from the N-terminus, the 338-residue chain is MTCTIVVGGQWGDEGKGKIISYLCKKDNPSIIARGGVGPNAGHTVEVDGEKYGIRMVPTGFPNVNAKLAVGAGVLTDPEVLIKEIKMLEKFNVGERILVDYRCGIIEEVHKELDKSNEHLSKEIGSTGTGCGPANVDRAMRTLKQGKDVESISKYLGDVSEAVNEALESGDNVLIEGTQGSLLSLFYGSYPYVTSKDTNAASFAADVGIGPTKIDEVVAVFKSYPTRVGEGPFPTEMSLQEAENLGVVEYGTVTGRRRRVGYFDHELAKKVCRLNGATQIAITCLDKYDSDCYGITDYEKLSEKGKAFIKEVEEKVGVKVTLISTGPKLEQTIDVRNE.

Residues 12–18 (GDEGKGK) and 42–44 (GHT) contribute to the GTP site. Asp13 serves as the catalytic Proton acceptor. Mg(2+) contacts are provided by Asp13 and Gly42. IMP-binding positions include 13–16 (DEGK), 40–43 (NAGH), Thr127, Arg141, Gln179, Thr194, and Arg256. Catalysis depends on His43, which acts as the Proton donor. 252–258 (TVTGRRR) is a substrate binding site. Residues Arg258, 284 to 286 (CLD), and 324 to 326 (STG) each bind GTP.

The protein belongs to the adenylosuccinate synthetase family. As to quaternary structure, homodimer. Requires Mg(2+) as cofactor.

It is found in the cytoplasm. The enzyme catalyses IMP + L-aspartate + GTP = N(6)-(1,2-dicarboxyethyl)-AMP + GDP + phosphate + 2 H(+). It participates in purine metabolism; AMP biosynthesis via de novo pathway; AMP from IMP: step 1/2. Functionally, plays an important role in the de novo pathway of purine nucleotide biosynthesis. Catalyzes the first committed step in the biosynthesis of AMP from IMP. The sequence is that of Adenylosuccinate synthetase from Methanococcus maripaludis (strain DSM 14266 / JCM 13030 / NBRC 101832 / S2 / LL).